A 101-amino-acid polypeptide reads, in one-letter code: MMLEHVLVLSAYLFSVGLYGLITSRNMVRALMCLELILNAVNLNFVTFSDFFDSRQLKGAIFSIFVIAIAAAEAAIGLAIVSSIYRNRKSTRINQSNLLNK.

The next 3 membrane-spanning stretches (helical) occupy residues 2 to 22, 32 to 52, and 61 to 81; these read MLEH…YGLI, MCLE…SDFF, and IFSI…LAIV.

The protein belongs to the complex I subunit 4L family. In terms of assembly, NDH is composed of at least 16 different subunits, 5 of which are encoded in the nucleus.

The protein resides in the plastid. The protein localises to the chloroplast thylakoid membrane. It carries out the reaction a plastoquinone + NADH + (n+1) H(+)(in) = a plastoquinol + NAD(+) + n H(+)(out). It catalyses the reaction a plastoquinone + NADPH + (n+1) H(+)(in) = a plastoquinol + NADP(+) + n H(+)(out). Functionally, NDH shuttles electrons from NAD(P)H:plastoquinone, via FMN and iron-sulfur (Fe-S) centers, to quinones in the photosynthetic chain and possibly in a chloroplast respiratory chain. The immediate electron acceptor for the enzyme in this species is believed to be plastoquinone. Couples the redox reaction to proton translocation, and thus conserves the redox energy in a proton gradient. This chain is NAD(P)H-quinone oxidoreductase subunit 4L, chloroplastic, found in Helianthus annuus (Common sunflower).